Here is a 498-residue protein sequence, read N- to C-terminus: Trehalose-6-phosphate synthase (498 aa).

D-glucose 6-phosphate is bound at residue arginine 28. Position 48–49 (48–49) interacts with UDP-alpha-D-glucose; sequence GG. D-glucose 6-phosphate is bound by residues tyrosine 106 and aspartate 160. UDP-alpha-D-glucose contacts are provided by arginine 302 and lysine 307. Arginine 340 serves as a coordination point for D-glucose 6-phosphate. A UDP-alpha-D-glucose-binding site is contributed by 405 to 409; sequence LVAKE.

The protein belongs to the glycosyltransferase 20 family. Homotetramer.

The enzyme catalyses ADP-alpha-D-glucose + D-glucose 6-phosphate = alpha,alpha-trehalose 6-phosphate + ADP + H(+). It carries out the reaction CDP-alpha-D-glucose + D-glucose 6-phosphate = alpha,alpha-trehalose 6-phosphate + CDP + H(+). The catalysed reaction is GDP-alpha-D-glucose + D-glucose 6-phosphate = alpha,alpha-trehalose 6-phosphate + GDP + H(+). It catalyses the reaction TDP-alpha-D-glucose + D-glucose 6-phosphate = 5-methyl-UDP + alpha,alpha-trehalose 6-phosphate + H(+). The enzyme catalyses D-glucose 6-phosphate + UDP-alpha-D-glucose = alpha,alpha-trehalose 6-phosphate + UDP + H(+). Its pathway is glycan biosynthesis; trehalose biosynthesis. Functionally, probably involved in the osmoprotection via the biosynthesis of trehalose and in the production of glycogen and alpha-glucan via the TreS-Pep2 branch involved in the biosynthesis of maltose-1-phosphate (M1P). Catalyzes the transfer of glucose from UDP-glucose (UDP-Glc) to D-glucose 6-phosphate (Glc-6-P) to form trehalose-6-phosphate. Probably also able to use ADP-Glc, CDP-Glc, GDP-Glc and TDP-Glc as glucosyl donors. The protein is Trehalose-6-phosphate synthase of Mycobacterium leprae (strain TN).